Here is a 592-residue protein sequence, read N- to C-terminus: Protein kinase C zeta type (592 aa).

Residues 15-98 enclose the PB1 domain; the sequence is RVRLKAHYGG…EVLIIHVFPS (84 aa). Positions 79-145 are interaction with SQSTM1; the sequence is AFRLACQGRD…KRFNRRAYCG (67 aa). The Phorbol-ester/DAG-type zinc-finger motif lies at 130–180; it reads GHLFQAKRFNRRAYCGQCSERIWGLARQGYRCINCKLLVHKRCHVLVPLTC. Positions 252–518 constitute a Protein kinase domain; that stretch reads FDLIRVIGRG…FSDIKSHAFF (267 aa). ATP-binding positions include 258–266 and lysine 281; that span reads IGRGSYAKV. Aspartate 376 functions as the Proton acceptor in the catalytic mechanism. A Phosphothreonine; by PDPK1 and PI3K modification is found at threonine 410. Residues 519 to 590 enclose the AGC-kinase C-terminal domain; that stretch reads RSIDWDLLEK…INPLLLSAEE (72 aa). Threonine 560 carries the post-translational modification Phosphothreonine. A Phosphoserine modification is found at serine 591.

It belongs to the protein kinase superfamily. AGC Ser/Thr protein kinase family. PKC subfamily. Interacts with PARD6A, PARD6B and PARD6G. Part of a complex with PARD3, PARD6A or PARD6B or PARD6G and CDC42 or RAC1. Interacts with ADAP1/CENTA1. Forms a ternary complex with SQSTM1 and KCNAB2. Forms another ternary complex with SQSTM1 and GABRR3. Forms a complex with SQSTM1 and MAP2K5. Interacts (via the protein kinase domain) with WWC1. Forms a tripartite complex with WWC1 and DDR1, but predominantly in the absence of collagen. Component of the Par polarity complex, composed of at least phosphorylated PRKCZ, PARD3 and TIAM1. Interacts with PDPK1 (via N-terminal region). Interacts with WDFY2 (via WD repeats 1-3). Interacts with VAMP2. Forms a complex with WDFY2 and VAMP2. Interacts with APPL1. Interacts with WWC1, WWC2 and WWC3. Post-translationally, CDH5 is required for its phosphorylation at Thr-410. Phosphorylated by protein kinase PDPK1; phosphorylation is inhibited by the apoptotic C-terminal cleavage product of PKN2. Phosphorylation at Thr-410 by PI3K activates the kinase. As to expression, isoform 1: In brain, expressed in hippocampus, neocortex and cerebellum (at protein level). Also expressed in lung, liver, kidney, testis and to a lesser extent in pancreas, intestine and skin (at protein level). Isoform 2: Specifically expressed in brain where it localizes to the hippocampus, neocortex and cerebellum (at protein level).

The protein localises to the cytoplasm. It is found in the endosome. Its subcellular location is the cell junction. It localises to the membrane. It carries out the reaction L-seryl-[protein] + ATP = O-phospho-L-seryl-[protein] + ADP + H(+). The catalysed reaction is L-threonyl-[protein] + ATP = O-phospho-L-threonyl-[protein] + ADP + H(+). With respect to regulation, atypical PKCs (PRKCI and PRKCZ) exhibit an elevated basal enzymatic activity (that may be due to the interaction with SMG1 or SQSTM1) and are not regulated by diacylglycerol, phosphatidylserine, phorbol esters or calcium ions. Two specific sites, Thr-410 (activation loop of the kinase domain) and Thr-560 (turn motif), need to be phosphorylated for its full activation. Phosphatidylinositol 3,4,5-trisphosphate might be a physiological activator. Isoform 2: Constitutively active. Functionally, calcium- and diacylglycerol-independent serine/threonine-protein kinase that functions in phosphatidylinositol 3-kinase (PI3K) pathway and mitogen-activated protein (MAP) kinase cascade, and is involved in NF-kappa-B activation, mitogenic signaling, cell proliferation, cell polarity, inflammatory response and maintenance of long-term potentiation (LTP). Upon lipopolysaccharide (LPS) treatment in macrophages, or following mitogenic stimuli, functions downstream of PI3K to activate MAP2K1/MEK1-MAPK1/ERK2 signaling cascade independently of RAF1 activation. Required for insulin-dependent activation of AKT3, but may function as an adapter rather than a direct activator. Upon insulin treatment may act as a downstream effector of PI3K and contribute to the activation of translocation of the glucose transporter SLC2A4/GLUT4 and subsequent glucose transport in adipocytes. In EGF-induced cells, binds and activates MAP2K5/MEK5-MAPK7/ERK5 independently of its kinase activity and can activate JUN promoter through MEF2C. Through binding with SQSTM1/p62, functions in interleukin-1 signaling and activation of NF-kappa-B with the specific adapters RIPK1 and TRAF6. Participates in TNF-dependent transactivation of NF-kappa-B by phosphorylating and activating IKBKB kinase, which in turn leads to the degradation of NF-kappa-B inhibitors. In migrating astrocytes, forms a cytoplasmic complex with PARD6A and is recruited by CDC42 to function in the establishment of cell polarity along with the microtubule motor and dynein. In association with FEZ1, stimulates neuronal differentiation in PC12 cells. In the inflammatory response, is required for the T-helper 2 (Th2) differentiation process, including interleukin production, efficient activation of JAK1 and the subsequent phosphorylation and nuclear translocation of STAT6. May be involved in development of allergic airway inflammation (asthma), a process dependent on Th2 immune response. In the NF-kappa-B-mediated inflammatory response, can relieve SETD6-dependent repression of NF-kappa-B target genes by phosphorylating the RELA subunit at 'Ser-311'. Phosphorylates VAMP2 in vitro. Phosphorylates and activates LRRK1, which phosphorylates RAB proteins involved in intracellular trafficking. In terms of biological role, involved in late synaptic long term potentiation phase in CA1 hippocampal cells and long term memory maintenance. This Rattus norvegicus (Rat) protein is Protein kinase C zeta type (Prkcz).